Here is a 345-residue protein sequence, read N- to C-terminus: MPISPALAERIATSPKAELHIHIEGSLEPELMFALAERNGVKLPYASVDEVRAAYAFNDLQSFLDLYYAGASVLLTEQDFYDMTAAYVARAVADNVRHAEIFFDPQTHTARDVPMHVVIGGIVRALDDAERAHGFSSRLILCFLRHLSEADAFDTLEAALPYIQDPANRIIGVGLDSSERGNPPEKFARVFARCKALGLRLVAHAGEEGPAQYVIDALDILQVERIDHGVRAIDDAALVKRLAASRVALTVCPLSNEKLKVYPDLRDHSLKQLLDAGCAVTLHSDDPAYFGGYMNTNWLATFNALGLSAADAHTLARNSFEASFLPEQDKALWLNAVDIHWRAHT.

Residues His20, His22, and His204 each contribute to the Zn(2+) site. Catalysis depends on Glu207, which acts as the Proton donor. Asp285 lines the Zn(2+) pocket. A substrate-binding site is contributed by Asp286.

Belongs to the metallo-dependent hydrolases superfamily. Adenosine and AMP deaminases family. Adenine deaminase type 2 subfamily. Zn(2+) is required as a cofactor.

It carries out the reaction adenine + H2O + H(+) = hypoxanthine + NH4(+). Its function is as follows. Catalyzes the hydrolytic deamination of adenine to hypoxanthine. Plays an important role in the purine salvage pathway and in nitrogen catabolism. The polypeptide is Adenine deaminase (Ralstonia nicotianae (strain ATCC BAA-1114 / GMI1000) (Ralstonia solanacearum)).